Here is a 430-residue protein sequence, read N- to C-terminus: Enolase (430 aa).

Residue glutamine 165 coordinates (2R)-2-phosphoglycerate. Catalysis depends on glutamate 207, which acts as the Proton donor. Mg(2+)-binding residues include aspartate 244, glutamate 287, and aspartate 314. The (2R)-2-phosphoglycerate site is built by lysine 339, arginine 368, serine 369, and lysine 390. The active-site Proton acceptor is lysine 339.

It belongs to the enolase family. Component of the RNA degradosome, a multiprotein complex involved in RNA processing and mRNA degradation. Mg(2+) serves as cofactor.

It localises to the cytoplasm. Its subcellular location is the secreted. The protein localises to the cell surface. It carries out the reaction (2R)-2-phosphoglycerate = phosphoenolpyruvate + H2O. It functions in the pathway carbohydrate degradation; glycolysis; pyruvate from D-glyceraldehyde 3-phosphate: step 4/5. Catalyzes the reversible conversion of 2-phosphoglycerate (2-PG) into phosphoenolpyruvate (PEP). It is essential for the degradation of carbohydrates via glycolysis. The sequence is that of Enolase from Xylella fastidiosa (strain 9a5c).